The primary structure comprises 287 residues: Outer membrane protein TP0453 (287 aa).

The first 24 residues, 1-24 (MIRRRYRGCTQGAWIVSVGMLFAS), serve as a signal peptide directing secretion. Cys25 carries N-palmitoyl cysteine lipidation. Cys25 carries the S-diacylglycerol cysteine lipid modification. Amphipathic helix stretches follow at residues 36-40 (PLGVV), 56-63 (ENLISRII), 69-77 (KADIKKIVD), 103-112 (YAFTNLIFSR), 155-162 (MSKMLSRL), 172-179 (PRFEKECT), 194-202 (GGHFITKLL), 240-250 (FPIQFLISRVL), and 270-279 (AERLASVISS).

A mix of monomer and dimers; may integrate into the membrane as a dimer. Post-translationally, palmitoylated upon expression of a fusion protein with first 46 residues fused to PhoA in E.coli.

Its subcellular location is the cell outer membrane. Functionally, might be involved in ligand transport, alters membrane permeability at acidic pH (4.0 to 5.5). Incubation of the non-lipidated form with lipid vesicles increases their permeability. This Treponema pallidum (strain Nichols) protein is Outer membrane protein TP0453.